Reading from the N-terminus, the 119-residue chain is Small ribosomal subunit protein bS16 (119 aa).

The span at 96 to 107 shows a compositional bias: basic residues; that stretch reads RKKRRAYRQRRS. The tract at residues 96–119 is disordered; that stretch reads RKKRRAYRQRRSTQREEAAKDATK. The segment covering 108–119 has biased composition (basic and acidic residues); sequence TQREEAAKDATK.

It belongs to the bacterial ribosomal protein bS16 family.

The protein is Small ribosomal subunit protein bS16 of Chlamydia pneumoniae (Chlamydophila pneumoniae).